A 293-amino-acid chain; its full sequence is MEHLLSMEHLSNSEIYDLITIACQFKSGERPLPQFNGQYVSNLFFENSTRTKCSFEMAEQKLGLKLINFETSTSSVKKGESLYDTCKTLESIGVDLLVIRHSQNSYYEELDQLNIPIANAGDGSGQHPTQSLLDIMTIYEEYGSFEGLNILICGDIKNSRVARSNYHSLTSLGANVMFSSPKEWVDNTLEAPYVEIDEVIDKVDIVMLLRVQHERHGISGEANFAAEEYHQQFGLTQARYDKLKEEAIVMHPAPVNRGVEIKSELVEAPKSRIFKQMENGMYLRMAVISALLQ.

Positions 50 and 51 each coordinate carbamoyl phosphate. K78 is an L-aspartate binding site. Carbamoyl phosphate contacts are provided by R100, H127, and Q130. 2 residues coordinate L-aspartate: R160 and R210. Carbamoyl phosphate contacts are provided by A253 and P254.

The protein belongs to the aspartate/ornithine carbamoyltransferase superfamily. ATCase family. Heterododecamer (2C3:3R2) of six catalytic PyrB chains organized as two trimers (C3), and six regulatory PyrI chains organized as three dimers (R2).

It catalyses the reaction carbamoyl phosphate + L-aspartate = N-carbamoyl-L-aspartate + phosphate + H(+). Its pathway is pyrimidine metabolism; UMP biosynthesis via de novo pathway; (S)-dihydroorotate from bicarbonate: step 2/3. Functionally, catalyzes the condensation of carbamoyl phosphate and aspartate to form carbamoyl aspartate and inorganic phosphate, the committed step in the de novo pyrimidine nucleotide biosynthesis pathway. In Staphylococcus epidermidis (strain ATCC 12228 / FDA PCI 1200), this protein is Aspartate carbamoyltransferase catalytic subunit.